The following is a 177-amino-acid chain: Large ribosomal subunit protein uL6 (177 aa).

It belongs to the universal ribosomal protein uL6 family. In terms of assembly, part of the 50S ribosomal subunit.

This protein binds to the 23S rRNA, and is important in its secondary structure. It is located near the subunit interface in the base of the L7/L12 stalk, and near the tRNA binding site of the peptidyltransferase center. This Zymomonas mobilis subsp. mobilis (strain ATCC 31821 / ZM4 / CP4) protein is Large ribosomal subunit protein uL6.